We begin with the raw amino-acid sequence, 146 residues long: Hemoglobin subunit beta-1 (146 aa).

Positions Lys-2 to Cys-146 constitute a Globin domain. Heme b contacts are provided by His-63 and His-92.

This sequence belongs to the globin family. In terms of assembly, hb1 is a heterotetramer of two alpha-1 chains and two beta-1 chains; Hb2 is a heterotetramer of two alpha-2 chains and two beta-1 chains. As to expression, red blood cells.

Its function is as follows. Involved in oxygen transport from gills to the various peripheral tissues. The protein is Hemoglobin subunit beta-1 (hbb1) of Anarhichas minor (Arctic spotted wolffish).